The primary structure comprises 198 residues: Probable GTP-binding protein EngB (198 aa).

Positions 36 to 198 constitute an EngB-type G domain; the sequence is SEPQFAFIGR…NLSKLQELLE (163 aa). GTP is bound by residues 44 to 51, 70 to 74, 88 to 91, 155 to 158, and 182 to 184; these read GRSNVGKS, GRTQL, DLPG, NKID, and ISA. The Mg(2+) site is built by Ser-51 and Thr-72.

Belongs to the TRAFAC class TrmE-Era-EngA-EngB-Septin-like GTPase superfamily. EngB GTPase family. Requires Mg(2+) as cofactor.

In terms of biological role, necessary for normal cell division and for the maintenance of normal septation. This Mesomycoplasma hyopneumoniae (strain 232) (Mycoplasma hyopneumoniae) protein is Probable GTP-binding protein EngB.